A 409-amino-acid polypeptide reads, in one-letter code: Phosphoserine phosphatase SerB2 (409 aa).

ACT domains are found at residues 8-86 and 102-174; these read LITV…RSDD and GRPI…DYGL. The active-site Nucleophile is aspartate 185. Mg(2+) is bound by residues aspartate 185 and aspartate 187. The active-site Proton donor is aspartate 187. Residues glutamate 194, arginine 230, 273–274, and lysine 318 contribute to the substrate site; that span reads SG. Residue aspartate 341 participates in Mg(2+) binding. Position 344 (asparagine 344) interacts with substrate.

It belongs to the HAD-like hydrolase superfamily. SerB family. In terms of assembly, homodimer. The dimeric population shifts to a tetramer in the presence of L-serine, which inactivates the enzyme. Requires Mg(2+) as cofactor. Mn(2+) is required as a cofactor.

The protein localises to the secreted. The protein resides in the host cytoplasm. It localises to the host cytosol. The catalysed reaction is O-phospho-L-serine + H2O = L-serine + phosphate. It catalyses the reaction O-phospho-D-serine + H2O = D-serine + phosphate. The enzyme catalyses O-phospho-L-seryl-[protein] + H2O = L-seryl-[protein] + phosphate. It carries out the reaction O-phospho-L-threonyl-[protein] + H2O = L-threonyl-[protein] + phosphate. It functions in the pathway amino-acid biosynthesis; L-serine biosynthesis; L-serine from 3-phospho-D-glycerate: step 3/3. Clofazimine, a drug being evaluated for XDR and MDR tuberculosis, inhibits SerB2 phosphatase activity and reverses the various functional effects described above and interactions with host proteins. Is inhibited by known PSP inhibitors such as chlorpromazine, DL-AP3 and sodium orthovanadate, but not by okadaic acid. By binding to the ACT domains, amino-acids have various effects on enzyme activity: L-serine and L-glycine act as inhibitors, whereas L-lysine, L-tyrosine and L-phenylalanine are activators. High throughput screen has been performed to identify specific PSP inhibitors with activity against intracellular bacteria; the two best hits identified in this screen, clorobiocin and rosaniline, are bactericidal and kill bacteria in infected macrophages in a dose-dependent manner. In terms of biological role, catalyzes the dephosphorylation of O-phospho-L-serine into L-serine, a step in the L-serine biosynthetic pathway. Exhibits high specificity for L-phosphoserine compared to substrates like L-phosphothreonine (5% relative activity) and L-phosphotyrosine (1.7% relative activity). Functionally, in the host, induces significant cytoskeleton rearrangements through cofilin dephosphorylation and its subsequent activation, and affects the expression of genes that regulate actin dynamics. It specifically interacts with HSP90, HSP70 and HSP27 that block apoptotic pathways but not with other HSPs. Also interacts with GAPDH. It actively dephosphorylates MAP kinase p38 and NF-kappa B p65 (specifically at Ser-536) that play crucial roles in inflammatory and immune responses. This in turn leads to down-regulation of Interleukin 8, a chemotactic and inflammatory cytokine. Thus might help the pathogen to evade the host's immune response. Exogenous addition of purified SerB2 protein to human THP-1 cells (that can be differentiated into macrophage-like cells) induces microtubule rearrangements; the phosphatase activity is co-related to the elicited rearrangements, while addition of the ACT-domains alone elicits no rearrangements. The sequence is that of Phosphoserine phosphatase SerB2 from Mycobacterium tuberculosis (strain ATCC 25618 / H37Rv).